An 89-amino-acid chain; its full sequence is Co-chaperonin GroES (89 aa).

Belongs to the GroES chaperonin family. As to quaternary structure, heptamer of 7 subunits arranged in a ring. Interacts with the chaperonin GroEL.

The protein localises to the cytoplasm. In terms of biological role, together with the chaperonin GroEL, plays an essential role in assisting protein folding. The GroEL-GroES system forms a nano-cage that allows encapsulation of the non-native substrate proteins and provides a physical environment optimized to promote and accelerate protein folding. GroES binds to the apical surface of the GroEL ring, thereby capping the opening of the GroEL channel. The protein is Co-chaperonin GroES of Wolinella succinogenes (strain ATCC 29543 / DSM 1740 / CCUG 13145 / JCM 31913 / LMG 7466 / NCTC 11488 / FDC 602W) (Vibrio succinogenes).